A 327-amino-acid polypeptide reads, in one-letter code: 4-hydroxy-2-oxoglutarate aldolase, mitochondrial (327 aa).

Residues 1 to 25 (MLGPQVWSSVRQGLSRSLSRNVGVW) constitute a mitochondrion transit peptide. Residue 77 to 78 (SN) coordinates substrate. K196 (schiff-base intermediate with substrate) is an active-site residue. Substrate-binding residues include S198 and G222.

Belongs to the DapA family. In terms of assembly, homotetramer.

The protein localises to the mitochondrion. It catalyses the reaction (4S)-4-hydroxy-2-oxoglutarate = glyoxylate + pyruvate. It carries out the reaction (4R)-4-hydroxy-2-oxoglutarate = glyoxylate + pyruvate. Its activity is regulated as follows. Inhibited by divalent cations. Functionally, catalyzes the final step in the metabolic pathway of hydroxyproline. In Homo sapiens (Human), this protein is 4-hydroxy-2-oxoglutarate aldolase, mitochondrial (HOGA1).